A 578-amino-acid polypeptide reads, in one-letter code: ATP-dependent RNA helicase CHR1 (578 aa).

Positions 1–95 (MDIFRILSRG…NETKAKEEEI (95 aa)) are disordered. 2 stretches are compositionally biased toward basic and acidic residues: residues 44-53 (EVERETDFFH) and 78-94 (NKEE…KEEE). Residues 131–159 (DMIGRFHINKKVLSNLIDNEFVEPTPIQC) carry the Q motif motif. One can recognise a Helicase ATP-binding domain in the interval 162–339 (IPITLNNRDL…HSIMKDPLRI (178 aa)). Residue 175 to 182 (APTGSGKT) participates in ATP binding. The DEAD box motif lies at 286-289 (DEAD). One can recognise a Helicase C-terminal domain in the interval 350-514 (TIDQKLVFTG…GYSQWMEDMG (165 aa)). 2 stretches are compositionally biased toward basic and acidic residues: residues 517–531 (SKKE…EIQR) and 561–578 (ESKQ…EREE). Positions 517-578 (SKKEKKQIKT…ESHSNDEREE (62 aa)) are disordered.

This sequence belongs to the DEAD box helicase family. DDX52/ROK1 subfamily. As to quaternary structure, interacts with the U3 snoRNA and is associated with the 90S and 40S pre-ribosomes.

It localises to the nucleus. The protein localises to the nucleolus. It carries out the reaction ATP + H2O = ADP + phosphate + H(+). Its function is as follows. ATP-dependent RNA helicase involved in 40S ribosomal subunit biogenesis. Required for the processing and cleavage of 35S pre-rRNA at sites A0, A1, and A2, leading to mature 18S rRNA. This Candida albicans (strain SC5314 / ATCC MYA-2876) (Yeast) protein is ATP-dependent RNA helicase CHR1 (CHR1).